Consider the following 302-residue polypeptide: 4-hydroxy-tetrahydrodipicolinate synthase (302 aa).

A pyruvate-binding site is contributed by Thr-55. The active-site Proton donor/acceptor is the Tyr-144. Lys-172 functions as the Schiff-base intermediate with substrate in the catalytic mechanism. Val-214 contacts pyruvate.

Belongs to the DapA family. As to quaternary structure, homotetramer; dimer of dimers.

The protein localises to the cytoplasm. The enzyme catalyses L-aspartate 4-semialdehyde + pyruvate = (2S,4S)-4-hydroxy-2,3,4,5-tetrahydrodipicolinate + H2O + H(+). The protein operates within amino-acid biosynthesis; L-lysine biosynthesis via DAP pathway; (S)-tetrahydrodipicolinate from L-aspartate: step 3/4. Its function is as follows. Catalyzes the condensation of (S)-aspartate-beta-semialdehyde [(S)-ASA] and pyruvate to 4-hydroxy-tetrahydrodipicolinate (HTPA). This Synechococcus sp. (strain CC9605) protein is 4-hydroxy-tetrahydrodipicolinate synthase.